Here is a 212-residue protein sequence, read N- to C-terminus: Large ribosomal subunit protein uL3 (212 aa).

The interval 130 to 155 is disordered; the sequence is KRGNMTHGSKNHRLPGSTGAGTTPGR.

It belongs to the universal ribosomal protein uL3 family. In terms of assembly, part of the 50S ribosomal subunit. Forms a cluster with proteins L14 and L19.

One of the primary rRNA binding proteins, it binds directly near the 3'-end of the 23S rRNA, where it nucleates assembly of the 50S subunit. This chain is Large ribosomal subunit protein uL3, found in Rippkaea orientalis (strain PCC 8801 / RF-1) (Cyanothece sp. (strain PCC 8801)).